Reading from the N-terminus, the 296-residue chain is MSFPTDMETNEILDQLDKIDERNEDILLKSLKASKCTYKPWSREEFLRRLLTYRSRWAYVNDPQIGEINCCLNGWLCESNNILVCDVCRNKINLTALQQVDAENDSLNELPEKTKERLEVSLKEEHQDNCLWRLHKFPPDIYHLSVSAELVQVGRRFNSLSTRLVSTHLPEEMTLKRLEKVANKIRVDWEKEDAAVLLGIALTGWSEQVPGRLYVCNYCHRRLGVWNLQSEGQDFDVLEEHKKSCPWVIPQPFTDLLGWQQIFELLCKESIFQSTTKTMDVSQYTDYTFSLLQGLR.

The C3HC-type zinc finger occupies Pro40–Thr174.

Its subcellular location is the cytoplasm. It is found in the nucleus. Its function is as follows. Involved in the export of mRNA from the nucleus to the cytoplasm. This chain is mRNA export factor rsm1 (rsm1), found in Schizosaccharomyces pombe (strain 972 / ATCC 24843) (Fission yeast).